We begin with the raw amino-acid sequence, 669 residues long: Translation factor GUF1, mitochondrial (669 aa).

A mitochondrion-targeting transit peptide spans methionine 1–tyrosine 49. The tr-type G domain maps to glutamate 66 to lysine 247. Residues alanine 75–serine 82, aspartate 140–histidine 144, and asparagine 194–aspartate 197 contribute to the GTP site.

This sequence belongs to the TRAFAC class translation factor GTPase superfamily. Classic translation factor GTPase family. LepA subfamily.

Its subcellular location is the mitochondrion inner membrane. It carries out the reaction GTP + H2O = GDP + phosphate + H(+). Its function is as follows. Promotes mitochondrial protein synthesis. May act as a fidelity factor of the translation reaction, by catalyzing a one-codon backward translocation of tRNAs on improperly translocated ribosomes. Binds to mitochondrial ribosomes in a GTP-dependent manner. The polypeptide is Translation factor GUF1, mitochondrial (Bos taurus (Bovine)).